Reading from the N-terminus, the 351-residue chain is MERRIHLMQLPREVLLGENLTGEVVSVAKRIGLTGKALVIYGPKTKEIAGRDVEDAIKSAYEVSSLTIRKGATMEEVERTIEKIKDEGIGWVIAVGGGSIIDVAKLSSFKTGVPFISFPTTASHDGIASANASIKDLGSKTSVKAVPPVAVIADVKVIKTAPYRYLAAGVGDTISNLTAVRDWQLAHRIKGEYYSEYAASLSLMSAKMVMRNADIIRLGNEESVRKVIKALISTGVAMSIAGSSRPASGAEHLFSHALDMLLDKPALHGEQTGLGTIIMAYLHGMKWERVRETLKRVGAPTNAYELGIDPEVIIEALTIAHTIRPERYTILGKDGLTREAAEKAAKITGVI.

NAD(+)-binding positions include 98–102 (GSIID) and 120–123 (TTAS). A substrate-binding site is contributed by Asp125. Ser129 serves as a coordination point for NAD(+). Residue Asp172 participates in substrate binding. Zn(2+)-binding residues include Asp172 and His252. Substrate is bound at residue His256. His268 contributes to the Zn(2+) binding site.

This sequence belongs to the glycerol-1-phosphate dehydrogenase family. The cofactor is Zn(2+).

Its subcellular location is the cytoplasm. It catalyses the reaction sn-glycerol 1-phosphate + NAD(+) = dihydroxyacetone phosphate + NADH + H(+). The catalysed reaction is sn-glycerol 1-phosphate + NADP(+) = dihydroxyacetone phosphate + NADPH + H(+). The protein operates within membrane lipid metabolism; glycerophospholipid metabolism. Functionally, catalyzes the NAD(P)H-dependent reduction of dihydroxyacetonephosphate (DHAP or glycerone phosphate) to glycerol 1-phosphate (G1P). The G1P thus generated is used as the glycerophosphate backbone of phospholipids in the cellular membranes of Archaea. This is Glycerol-1-phosphate dehydrogenase [NAD(P)+] from Thermococcus kodakarensis (strain ATCC BAA-918 / JCM 12380 / KOD1) (Pyrococcus kodakaraensis (strain KOD1)).